We begin with the raw amino-acid sequence, 163 residues long: MKGKAGGKAADAAEKVAASNRRARFDYDIEDTWEAGLVLTGSEVKSLREGNVNLSDAYAMPRGEELWLLNCRIGEYKQAAHFGHAPLRDRKLLMNRAEIDRVRGKVEQRGYTLVPLRIYFKQGWAKVELGLARGRSHEDRRGAIAERESKREMDRALARGRRR.

A compositionally biased stretch (basic and acidic residues) spans 140–157 (RRGAIAERESKREMDRAL). The segment at 140–163 (RRGAIAERESKREMDRALARGRRR) is disordered.

It belongs to the SmpB family.

The protein localises to the cytoplasm. Required for rescue of stalled ribosomes mediated by trans-translation. Binds to transfer-messenger RNA (tmRNA), required for stable association of tmRNA with ribosomes. tmRNA and SmpB together mimic tRNA shape, replacing the anticodon stem-loop with SmpB. tmRNA is encoded by the ssrA gene; the 2 termini fold to resemble tRNA(Ala) and it encodes a 'tag peptide', a short internal open reading frame. During trans-translation Ala-aminoacylated tmRNA acts like a tRNA, entering the A-site of stalled ribosomes, displacing the stalled mRNA. The ribosome then switches to translate the ORF on the tmRNA; the nascent peptide is terminated with the 'tag peptide' encoded by the tmRNA and targeted for degradation. The ribosome is freed to recommence translation, which seems to be the essential function of trans-translation. The sequence is that of SsrA-binding protein from Anaeromyxobacter dehalogenans (strain 2CP-C).